Reading from the N-terminus, the 437-residue chain is Ribosomal protein uS12 methylthiotransferase RimO (437 aa).

An MTTase N-terminal domain is found at asparagine 9 to lysine 128. The [4Fe-4S] cluster site is built by cysteine 18, cysteine 57, cysteine 91, cysteine 152, cysteine 156, and cysteine 159. One can recognise a Radical SAM core domain in the interval threonine 138 to aspartate 368. The TRAM domain maps to glutamine 371–alanine 437.

This sequence belongs to the methylthiotransferase family. RimO subfamily. The cofactor is [4Fe-4S] cluster.

The protein localises to the cytoplasm. The catalysed reaction is L-aspartate(89)-[ribosomal protein uS12]-hydrogen + (sulfur carrier)-SH + AH2 + 2 S-adenosyl-L-methionine = 3-methylsulfanyl-L-aspartate(89)-[ribosomal protein uS12]-hydrogen + (sulfur carrier)-H + 5'-deoxyadenosine + L-methionine + A + S-adenosyl-L-homocysteine + 2 H(+). Its function is as follows. Catalyzes the methylthiolation of an aspartic acid residue of ribosomal protein uS12. The sequence is that of Ribosomal protein uS12 methylthiotransferase RimO from Flavobacterium johnsoniae (strain ATCC 17061 / DSM 2064 / JCM 8514 / BCRC 14874 / CCUG 350202 / NBRC 14942 / NCIMB 11054 / UW101) (Cytophaga johnsonae).